Reading from the N-terminus, the 260-residue chain is 3'-5' ssDNA/RNA exonuclease TatD (260 aa).

Positions 92, 128, and 153 each coordinate a divalent metal cation.

The protein belongs to the metallo-dependent hydrolases superfamily. TatD-type hydrolase family. TatD subfamily. Monomer. It depends on Mg(2+) as a cofactor.

It is found in the cytoplasm. Its function is as follows. 3'-5' exonuclease that prefers single-stranded DNA and RNA. May play a role in the H(2)O(2)-induced DNA damage repair. This is 3'-5' ssDNA/RNA exonuclease TatD from Pantoea ananatis (strain LMG 20103).